A 201-amino-acid chain; its full sequence is 3-isopropylmalate dehydratase small subunit (201 aa).

Belongs to the LeuD family. LeuD type 1 subfamily. Heterodimer of LeuC and LeuD.

The enzyme catalyses (2R,3S)-3-isopropylmalate = (2S)-2-isopropylmalate. Its pathway is amino-acid biosynthesis; L-leucine biosynthesis; L-leucine from 3-methyl-2-oxobutanoate: step 2/4. Catalyzes the isomerization between 2-isopropylmalate and 3-isopropylmalate, via the formation of 2-isopropylmaleate. The polypeptide is 3-isopropylmalate dehydratase small subunit (Kineococcus radiotolerans (strain ATCC BAA-149 / DSM 14245 / SRS30216)).